Consider the following 157-residue polypeptide: Pyruvoyl-dependent arginine decarboxylase 2 (157 aa).

Position 43 is a pyruvic acid (Ser) (Ser43).

This sequence belongs to the PdaD family. The cofactor is pyruvate.

It catalyses the reaction L-arginine + H(+) = agmatine + CO2. The protein is Pyruvoyl-dependent arginine decarboxylase 2 (pdaD2) of Archaeoglobus fulgidus (strain ATCC 49558 / DSM 4304 / JCM 9628 / NBRC 100126 / VC-16).